Here is a 232-residue protein sequence, read N- to C-terminus: 5'-methylthioadenosine/S-adenosylhomocysteine nucleosidase (232 aa).

The active-site Proton acceptor is glutamate 12. Residues glycine 78, isoleucine 152, and 173–174 contribute to the substrate site; that span reads ME. Aspartate 197 functions as the Proton donor in the catalytic mechanism.

This sequence belongs to the PNP/UDP phosphorylase family. MtnN subfamily. As to quaternary structure, homodimer.

It carries out the reaction S-adenosyl-L-homocysteine + H2O = S-(5-deoxy-D-ribos-5-yl)-L-homocysteine + adenine. It catalyses the reaction S-methyl-5'-thioadenosine + H2O = 5-(methylsulfanyl)-D-ribose + adenine. The enzyme catalyses 5'-deoxyadenosine + H2O = 5-deoxy-D-ribose + adenine. The protein operates within amino-acid biosynthesis; L-methionine biosynthesis via salvage pathway; S-methyl-5-thio-alpha-D-ribose 1-phosphate from S-methyl-5'-thioadenosine (hydrolase route): step 1/2. Functionally, catalyzes the irreversible cleavage of the glycosidic bond in both 5'-methylthioadenosine (MTA) and S-adenosylhomocysteine (SAH/AdoHcy) to adenine and the corresponding thioribose, 5'-methylthioribose and S-ribosylhomocysteine, respectively. Also cleaves 5'-deoxyadenosine, a toxic by-product of radical S-adenosylmethionine (SAM) enzymes, into 5-deoxyribose and adenine. Thus, is required for in vivo function of the radical SAM enzymes biotin synthase and lipoic acid synthase, that are inhibited by 5'-deoxyadenosine accumulation. This is 5'-methylthioadenosine/S-adenosylhomocysteine nucleosidase from Citrobacter koseri (strain ATCC BAA-895 / CDC 4225-83 / SGSC4696).